A 291-amino-acid chain; its full sequence is START domain-containing protein 10 (291 aa).

M1 is modified (N-acetylmethionine). The disordered stretch occupies residues 1–23 (MEKPAASTEPQGSRPALGRESVQ). The START domain maps to 14–224 (RPALGRESVQ…MYKACIKYPE (211 aa)). An N6-succinyllysine mark is found at K94, K197, and K202. Residues S253, S259, S284, and S289 each carry the phosphoserine modification. Positions 260-291 (LENIDESAVTESREERAGGAGGEGSDDDTSLT) are disordered.

In terms of processing, phosphorylation at Ser-284 by CK2 negatively regulates lipid transfer activity, possibly by decreasing membrane association. Testis, kidney, liver, and intestine with the highest level in the testis.

It localises to the cell projection. The protein resides in the cilium. The protein localises to the flagellum. Its subcellular location is the cytoplasm. It is found in the membrane. Functionally, phospholipid transfer protein that preferentially selects lipid species containing a palmitoyl or stearoyl chain on the sn-1 and an unsaturated fatty acyl chain (18:1 or 18:2) on the sn-2 position. Able to transfer phosphatidylcholine (PC) and phosphatidyetanolamline (PE) between membranes. May play metabolic roles in sperm maturation or fertilization. In Mus musculus (Mouse), this protein is START domain-containing protein 10 (Stard10).